The chain runs to 144 residues: Histone H2B.2, sperm (144 aa).

Positions 1 to 51 are disordered; it reads MPRSPAKTSPRKGSPRKGSPSRKASPKRGGKGAKRAGKGGRRRRVVKRRRR. Short sequence motifs (SPKK motif) lie at residues 4 to 7, 9 to 12, 14 to 17, 19 to 22, and 25 to 28; these read SPAK, SPRK, SPSR, and SPKR. Phosphoserine is present on residues Ser14, Ser19, and Ser25. Basic residues predominate over residues 24–51; it reads ASPKRGGKGAKRAGKGGRRRRVVKRRRR. O-linked (GlcNAc) serine glycosylation is present at Ser131. Lys139 is covalently cross-linked (Glycyl lysine isopeptide (Lys-Gly) (interchain with G-Cter in ubiquitin)).

The protein belongs to the histone H2B family. In terms of assembly, the nucleosome is a histone octamer containing two molecules each of H2A, H2B, H3 and H4 assembled in one H3-H4 heterotetramer and two H2A-H2B heterodimers. The octamer wraps approximately 147 bp of DNA. Post-translationally, monoubiquitination of Lys-139 gives a specific tag for epigenetic transcriptional activation and is also prerequisite for histone H3 'Lys-4' and 'Lys-79' methylation. Phosphorylated on SPKK motifs 3, 4 and 5; which may regulate DNA binding. Dephosphorylated during maturation of spermatids to mature sperm and rephosphorylated at fertilization.

It is found in the nucleus. It localises to the chromosome. Functionally, core component of nucleosome. Nucleosomes wrap and compact DNA into chromatin, limiting DNA accessibility to the cellular machineries which require DNA as a template. Histones thereby play a central role in transcription regulation, DNA repair, DNA replication and chromosomal stability. DNA accessibility is regulated via a complex set of post-translational modifications of histones, also called histone code, and nucleosome remodeling. This chain is Histone H2B.2, sperm, found in Parechinus angulosus (Angulate sea urchin).